Here is a 217-residue protein sequence, read N- to C-terminus: Thymidylate kinase (217 aa).

7–14 (GIDGAGKS) is a binding site for ATP.

It belongs to the thymidylate kinase family.

The enzyme catalyses dTMP + ATP = dTDP + ADP. Phosphorylation of dTMP to form dTDP in both de novo and salvage pathways of dTTP synthesis. The protein is Thymidylate kinase of Chlorobaculum parvum (strain DSM 263 / NCIMB 8327) (Chlorobium vibrioforme subsp. thiosulfatophilum).